The following is a 243-amino-acid chain: Probable enoyl-CoA hydratase echA6 (243 aa).

Belongs to the enoyl-CoA hydratase/isomerase family.

The catalysed reaction is a (3S)-3-hydroxyacyl-CoA = a (2E)-enoyl-CoA + H2O. It catalyses the reaction a 4-saturated-(3S)-3-hydroxyacyl-CoA = a (3E)-enoyl-CoA + H2O. Functionally, could possibly oxidize fatty acids using specific components. In Mycobacterium bovis (strain ATCC BAA-935 / AF2122/97), this protein is Probable enoyl-CoA hydratase echA6 (echA6).